The following is a 341-amino-acid chain: DNA-directed RNA polymerase subunit alpha (341 aa).

The alpha N-terminal domain (alpha-NTD) stretch occupies residues 1 to 237 (MLSLSKNWNA…EQLQLFISFE (237 aa)). The interval 252–341 (FSPYLLKRVD…LSKRYEDSYN (90 aa)) is alpha C-terminal domain (alpha-CTD).

The protein belongs to the RNA polymerase alpha chain family. In terms of assembly, homodimer. The RNAP catalytic core consists of 2 alpha, 1 beta, 1 beta' and 1 omega subunit. When a sigma factor is associated with the core the holoenzyme is formed, which can initiate transcription.

It carries out the reaction RNA(n) + a ribonucleoside 5'-triphosphate = RNA(n+1) + diphosphate. DNA-dependent RNA polymerase catalyzes the transcription of DNA into RNA using the four ribonucleoside triphosphates as substrates. This is DNA-directed RNA polymerase subunit alpha from Rickettsia bellii (strain OSU 85-389).